A 238-amino-acid chain; its full sequence is Beta-glucanase (238 aa).

Positions 1 to 26 (MMKKKSWFTLMITGVISLFFSVSAFA) are cleaved as a signal peptide. Residues 29 to 238 (VFWEPLSYFN…EYDWVKYTSN (210 aa)) form the GH16 domain. An intrachain disulfide couples cysteine 56 to cysteine 85. Glutamate 129 serves as the catalytic Nucleophile. Glutamate 133 serves as the catalytic Proton donor.

This sequence belongs to the glycosyl hydrolase 16 family.

The enzyme catalyses Hydrolysis of (1-&gt;4)-beta-D-glucosidic linkages in beta-D-glucans containing (1-&gt;3)- and (1-&gt;4)-bonds.. The protein is Beta-glucanase (gluB) of Paenibacillus polymyxa (Bacillus polymyxa).